The following is a 204-amino-acid chain: Calexcitin-1 (204 aa).

3 consecutive EF-hand domains span residues 25–61 (FLVKKWERIFSLFFDRNASHQVDWGDFYLVVKKVRDI), 75–110 (SLAALWEGLCSIADADKDQLISIDEWIGLLKKTDAK), and 115–150 (WFKDYQNFMFKLFDVSCDGVMDLAEYTDGMSTYGFD). D39, N41, S43, Q45, D50, D88, D90, D92, E99, D128, S130, D132, and E139 together coordinate Ca(2+).

The chain is Calexcitin-1 (cex-1) from Caenorhabditis elegans.